A 679-amino-acid chain; its full sequence is Stress-70 protein, mitochondrial (679 aa).

Residues 1–46 constitute a mitochondrion transit peptide; the sequence is MISASRAAAARLVGTAASRSPAAARPQDGWNGLSHEAFRFVSRRDY. Positions 1–432 are interaction with NFS1; the sequence is MISASRAAAA…IQGGVLAGDV (432 aa). Residues Thr-63 and Asn-64 each coordinate ADP. The nucleotide-binding domain (NBD) stretch occupies residues 63-431; sequence TNSCVAVMEG…AIQGGVLAGD (369 aa). At Lys-76 the chain carries N6-acetyllysine. Phosphothreonine is present on Thr-87. N6-acetyllysine; alternate is present on residues Lys-135 and Lys-138. 2 positions are modified to N6-succinyllysine; alternate: Lys-135 and Lys-138. Lys-143 is modified (N6-acetyllysine). N6-acetyllysine; alternate is present on Lys-206. Lys-206 bears the N6-succinyllysine; alternate mark. The residue at position 206 (Lys-206) is an N6-malonyllysine; alternate. Residues Lys-234 and Lys-288 each carry the N6-acetyllysine modification. N6-acetyllysine; alternate is present on Lys-300. Lys-300 carries the post-translational modification N6-succinyllysine; alternate. Residues Glu-313, Lys-316, and Ser-320 each coordinate ADP. Residue Lys-360 is modified to N6-acetyllysine; alternate. N6-succinyllysine; alternate is present on Lys-360. Position 368 is an N6-succinyllysine (Lys-368). ADP is bound by residues Gly-388 and Arg-391. Lys-394 bears the N6-succinyllysine mark. Ser-408 is subject to Phosphoserine. Positions 432–441 are interdomain linker; the sequence is VTDVLLLDVT. The segment at 432-679 is interaction with FXN and ISCU; the sequence is VTDVLLLDVT…QKEDQKEEKQ (248 aa). The segment at 442 to 679 is substrate-binding domain (SBD); that stretch reads PLSLGIETLG…QKEDQKEEKQ (238 aa). Position 513 is an omega-N-methylarginine (Arg-513). Lys-567 and Lys-600 each carry N6-acetyllysine; alternate. Lys-567 and Lys-600 each carry N6-succinyllysine; alternate. Lys-610 carries the N6-succinyllysine modification. N6-acetyllysine is present on Lys-612. Lys-646 carries the N6-acetyllysine; alternate modification. N6-succinyllysine; alternate is present on Lys-646. Positions 656-679 are disordered; the sequence is ASEREGSGSSGTGEQKEDQKEEKQ. A compositionally biased stretch (basic and acidic residues) spans 669 to 679; the sequence is EQKEDQKEEKQ.

This sequence belongs to the heat shock protein 70 family. As to quaternary structure, interacts strongly with the intermediate form of FXN and weakly with its mature form. Interacts with HSCB. Associates with the mitochondrial contact site and cristae organizing system (MICOS) complex, composed of at least MICOS10/MIC10, CHCHD3/MIC19, CHCHD6/MIC25, APOOL/MIC27, IMMT/MIC60, APOO/MIC23/MIC26 and QIL1/MIC13. This complex was also known under the names MINOS or MitOS complex. The MICOS complex associates with mitochondrial outer membrane proteins SAMM50, MTX1, MTX2 and DNAJC11, mitochondrial inner membrane protein TMEM11 and with HSPA9. Interacts with DNLZ, the interaction is required to prevent self-aggregation. Interacts with TESPA1. Interacts with PDPN. Interacts with NFU1, NFS1 and ISCU. Interacts with TP53; the interaction promotes TP53 degradation. Interacts (via SBD domain) with UBXN2A; the interaction with UBXN2A inhibits HSPA9/MOT-2 interaction with and degradation of TP53, thereby promotes TP53 translocation to the nucleus. Interacts with ITPR1 AND VDAC1; this interaction couples ITPR1 to VDAC1. Component of the TIM23 mitochondrial inner membrane pre-sequence translocase complex.

Its subcellular location is the mitochondrion. It localises to the nucleus. It is found in the nucleolus. The protein resides in the cytoplasm. The protein localises to the mitochondrion matrix. The catalysed reaction is ATP + H2O = ADP + phosphate + H(+). With respect to regulation, the chaperone activity is regulated by ATP-induced allosteric coupling of the nucleotide-binding (NBD) and substrate-binding (SBD) domains. ATP binding in the NBD leads to a conformational change in the NBD, which is transferred through the interdomain linker (IDL) to the substrate-binding domain (SBD). This elicits a reduced substrate affinity and a faster substrate exchange rate. Upon hydrolysis of ATP to ADP, the protein undergoes a conformational change that increases its affinity for substrate proteins. It cycles through repeated phases of ATP hydrolysis and nucleotide exchange, facilitating repeated cycles of substrate binding and release. Functions in collaboration with co-chaperones. Functions with the co-chaperone, DNLZ, to maintain solubility and regulate ATP hydrolysis. Nucleotide exchange factors, GRPEL1 and GRPEL2, accelerate nucleotide exchange. In terms of biological role, mitochondrial chaperone that plays a key role in mitochondrial protein import, folding, and assembly. Plays an essential role in the protein quality control system, the correct folding of proteins, the re-folding of misfolded proteins, and the targeting of proteins for subsequent degradation. These processes are achieved through cycles of ATP binding, ATP hydrolysis, and ADP release, mediated by co-chaperones. In mitochondria, it associates with the TIM (translocase of the inner membrane) protein complex to assist in the import and folding of mitochondrial proteins. Plays an important role in mitochondrial iron-sulfur cluster (ISC) biogenesis. Interacts with and stabilizes ISC cluster assembly proteins FXN, NFU1, NFS1 and ISCU. Regulates erythropoiesis via stabilization of ISC assembly. Regulates mitochondrial calcium-dependent apoptosis by coupling two calcium channels, ITPR1 and VDAC1, at the mitochondria-associated endoplasmic reticulum (ER) membrane to facilitate calcium transport from the ER lumen to the mitochondria intermembrane space, providing calcium for the downstream calcium channel MCU, which releases it into the mitochondrial matrix. Although primarily located in the mitochondria, it is also found in other cellular compartments. In the cytosol, it associates with proteins involved in signaling, apoptosis, or senescence. It may play a role in cell cycle regulation via its interaction with and promotion of degradation of TP53. May play a role in the control of cell proliferation and cellular aging. Protects against reactive oxygen species (ROS). Extracellular HSPA9 plays a cytoprotective role by preventing cell lysis following immune attack by the membrane attack complex by disrupting formation of the complex. The polypeptide is Stress-70 protein, mitochondrial (Mus musculus (Mouse)).